The primary structure comprises 252 residues: Insulin-induced gene 1 protein (252 aa).

At 1–59 (MPRLESGAWSCSCAARARHAARPGEAAPKADAMQSPSPSAGRAEREASGGSATTWRQHL) the chain is on the cytoplasmic side. The tract at residues 22–48 (RPGEAAPKADAMQSPSPSAGRAEREAS) is disordered. The chain crosses the membrane as a helical span at residues 60–82 (VQRSVVLFVVGAFMALVLNLLQI). Topologically, residues 83-101 (QRNVTLFPDEVIATLFSSA) are extracellular. The helical transmembrane segment at 102–119 (WWVPPCCGTAAAVVGLLY) threads the bilayer. Topologically, residues 120 to 134 (PCIDSHLGEPHKFKR) are cytoplasmic. Residues 135–157 (EWASVMRCIAVFVGINHASAKLD) traverse the membrane as a helical segment. At 158–160 (FAN) the chain is on the extracellular side. The helical transmembrane segment at 161 to 179 (NVQLSLTLAALSLGLWWTF) threads the bilayer. Over 180–184 (DRSRS) the chain is Cytoplasmic. Residues 185-206 (GLGLGITIAFVATLITQFLVYN) traverse the membrane as a helical segment. The Extracellular portion of the chain corresponds to 207–220 (GVYQYTSPDFLYIR). Residues 221-238 (SWLPCIFFSGGVTVGNIG) form a helical membrane-spanning segment. The Cytoplasmic segment spans residues 239–252 (RQLAMGIPEKPHND). Residues 246 to 252 (PEKPHND) carry the KxHxx motif.

The protein belongs to the INSIG family. In terms of assembly, interacts with SCAP; interaction is direct and only takes place in the presence of sterols; it prevents interaction between SCAP and the coat protein complex II (COPII). Associates with the SCAP-SREBP complex; association is mediated via its interaction with SCAP and only takes place in the presence of sterols.

It is found in the endoplasmic reticulum membrane. Oxysterol-binding protein that mediates feedback control of cholesterol synthesis by controlling both endoplasmic reticulum to Golgi transport of SCAP and degradation of HMGCR. Acts as a negative regulator of cholesterol biosynthesis by mediating the retention of the SCAP-SREBP complex in the endoplasmic reticulum, thereby blocking the processing of sterol regulatory element-binding proteins (SREBPs). Binds oxysterol, including 25-hydroxycholesterol, regulating interaction with SCAP and retention of the SCAP-SREBP complex in the endoplasmic reticulum. In presence of oxysterol, interacts with SCAP, retaining the SCAP-SREBP complex in the endoplasmic reticulum, thereby preventing SCAP from escorting SREBPs to the Golgi. Sterol deprivation reduces oxysterol-binding, disrupting the interaction between INSIG1 and SCAP, thereby promoting Golgi transport of the SCAP-SREBP complex, followed by processing and nuclear translocation of SREBPs. Also regulates cholesterol synthesis by regulating degradation of HMGCR. The polypeptide is Insulin-induced gene 1 protein (Gallus gallus (Chicken)).